We begin with the raw amino-acid sequence, 187 residues long: uncharacterized protein (187 aa).

Residues Ala-3–Tyr-23 traverse the membrane as a helical segment.

Its subcellular location is the membrane. This is an uncharacterized protein from Methanocaldococcus jannaschii (strain ATCC 43067 / DSM 2661 / JAL-1 / JCM 10045 / NBRC 100440) (Methanococcus jannaschii).